The following is a 261-amino-acid chain: tRNA pseudouridine synthase A 2 (261 aa).

Catalysis depends on aspartate 59, which acts as the Nucleophile. Tyrosine 117 lines the substrate pocket.

It belongs to the tRNA pseudouridine synthase TruA family. In terms of assembly, homodimer.

It catalyses the reaction uridine(38/39/40) in tRNA = pseudouridine(38/39/40) in tRNA. In terms of biological role, formation of pseudouridine at positions 38, 39 and 40 in the anticodon stem and loop of transfer RNAs. This Desulfotalea psychrophila (strain LSv54 / DSM 12343) protein is tRNA pseudouridine synthase A 2.